We begin with the raw amino-acid sequence, 507 residues long: Putative UDP-glucuronosyltransferase ugt-60 (507 aa).

Positions Met1–Ser15 are cleaved as a signal peptide. Asn312 carries N-linked (GlcNAc...) asparagine glycosylation. Residues Tyr379–Ala399 traverse the membrane as a helical segment.

It belongs to the UDP-glycosyltransferase family.

It localises to the membrane. It catalyses the reaction glucuronate acceptor + UDP-alpha-D-glucuronate = acceptor beta-D-glucuronoside + UDP + H(+). In Caenorhabditis elegans, this protein is Putative UDP-glucuronosyltransferase ugt-60 (ugt-60).